The primary structure comprises 454 residues: Maintenance of mitochondrial morphology protein 1 (454 aa).

The Lumenal segment spans residues 1 to 128 (MSMVIGIGDL…QSSGWGFAHG (128 aa)). A helical membrane pass occupies residues 129–149 (LLVGQLSVVAVLAFFIKFFIF). Residues 150–454 (GNSSMARPLM…SESETAVDSN (305 aa)) lie on the Cytoplasmic side of the membrane. The SMP-LTD domain maps to 207–430 (QSESLDWFNV…EPRFQLIELP (224 aa)).

The protein belongs to the MMM1 family. As to quaternary structure, homodimer. Component of the ER-mitochondria encounter structure (ERMES) or MDM complex, composed of MMM1, MDM10, MDM12 and MDM34. An MMM1 homodimer associates with one molecule of MDM12 on each side in a pairwise head-to-tail manner, and the SMP-LTD domains of MMM1 and MDM12 generate a continuous hydrophobic tunnel for phospholipid trafficking.

It localises to the endoplasmic reticulum membrane. Functionally, component of the ERMES/MDM complex, which serves as a molecular tether to connect the endoplasmic reticulum (ER) and mitochondria. Components of this complex are involved in the control of mitochondrial shape and protein biogenesis, and function in nonvesicular lipid trafficking between the ER and mitochondria. The MDM12-MMM1 subcomplex functions in the major beta-barrel assembly pathway that is responsible for biogenesis of all outer membrane beta-barrel proteins, and acts in a late step after the SAM complex. The MDM10-MDM12-MMM1 subcomplex further acts in the TOM40-specific pathway after the action of the MDM12-MMM1 complex. Essential for establishing and maintaining the structure of mitochondria and maintenance of mtDNA nucleoids. The chain is Maintenance of mitochondrial morphology protein 1 from Komagataella phaffii (strain GS115 / ATCC 20864) (Yeast).